We begin with the raw amino-acid sequence, 793 residues long: Serine/threonine-protein phosphatase BSU1 (793 aa).

Kelch repeat units lie at residues 53-109 (STTA…LYGT), 110-160 (LILI…IAAQ), 214-262 (IFLL…VFGG), 264-314 (KLHV…NQYQ), and 329-388 (HLYV…EASS). Phosphoserine occurs at positions 395 and 444. Mn(2+)-binding residues include D510, H512, D544, and N576. The active-site Proton donor is H577. Residues H629 and H707 each contribute to the Mn(2+) site. Phosphoserine is present on S764.

Belongs to the PPP phosphatase family. BSU subfamily. Interacts with CDG1, CDL1 and ASK7/BIN2. The cofactor is Mn(2+). Post-translationally, phosphorylated at Ser-395 and Ser-444. Phosphorylated at Ser-764 by CDG1 and CDL1. As to expression, mainly expressed in young, elongating tissues. In young seedlings, it is expressed at the base of the hypocotyl, at the tip and most peripheral cell layers of cotyledons, and in the vascular cylinder of roots, particularly in the elongation zone and at the point of emergence of lateral roots. In mature plants, it is still present in the root vasculature, but almost completely absent in fully expanded stems and leaves. In flowers, it is mainly expressed in sepal veins, anther filaments, and in the style, suggesting that BSU1 is expressed in actively growing regions and apparently enriched in vascular tissues.

It is found in the nucleus. The enzyme catalyses O-phospho-L-seryl-[protein] + H2O = L-seryl-[protein] + phosphate. The catalysed reaction is O-phospho-L-threonyl-[protein] + H2O = L-threonyl-[protein] + phosphate. Its activity is regulated as follows. Activated by phosphorylation at Ser-764 by CDG1. Its function is as follows. Phosphatase that acts as a positive regulator of brassinosteroid (BR) signaling. Dephosphorylates BES1, a transcription factor that regulates the expression of BR-response genes, thereby playing an important role in the regulation of response to BRs. Inactivates the negative regulator of BR signaling ASK7/BIN2 by dephosphorylation at 'Tyr-200'. The sequence is that of Serine/threonine-protein phosphatase BSU1 (BSU1) from Arabidopsis thaliana (Mouse-ear cress).